The primary structure comprises 1463 residues: Secretory phospholipase A2 receptor (1463 aa).

An N-terminal signal peptide occupies residues Met1 to Ala20. Residues Glu21–Ser1397 are Extracellular-facing. The Ricin B-type lectin domain occupies Lys38–Tyr161. Disulfide bonds link Cys51–Cys64, Cys89–Cys106, Cys178–Cys204, Cys192–Cys219, Cys260–Cys354, Cys330–Cys346, Cys406–Cys501, Cys478–Cys493, Cys617–Cys634, Cys699–Cys796, Cys774–Cys788, Cys840–Cys937, Cys914–Cys929, and Cys1067–Cys1087. Asn93 is a glycosylation site (N-linked (GlcNAc...) asparagine). Positions Thr173–Asp221 constitute a Fibronectin type-II domain. C-type lectin domains lie at Asn238–Lys355, Tyr385–Lys502, His522–Cys643, Gly673–Lys797, Tyr819–Lys938, Phe965–Cys1096, Tyr1121–Cys1232, and Phe1257–Lys1378. N-linked (GlcNAc...) asparagine glycosylation occurs at Asn454. An N-linked (GlcNAc...) asparagine glycan is attached at Asn1123. 3 disulfides stabilise this stretch: Cys1209–Cys1223, Cys1280–Cys1377, and Cys1354–Cys1369. Residues Ile1398 to Phe1418 form a helical membrane-spanning segment. The Cytoplasmic portion of the chain corresponds to Cys1419–Gln1463. An Endocytosis signal motif is present at residues Asn1436–Thr1442.

In terms of assembly, interacts with sPLA2-IB/PLA2G1B; this interaction mediates intracellular signaling as well as clearance of extracellular sPLA2-IB/PLA2G1B via endocytotic pathway. Interacts with sPLA2-X/PLA2G10; this interaction mediates sPLA2-X/PLA2G10 clearance and inactivation. The secretory phospholipase A2 receptor form may be produced by the action of metalloproteinases. It contains all extracellular domains and only lacks transmembrane and cytosolic regions. It is however unclear whether this form is produced by proteolytic cleavage as suggested by some experiments, or by alternative splicing, as in the case of isoform 2 that shares all characteristics of secretory phospholipase A2 receptor form. As to expression, expressed in podocytes (at protein level). Present in lung macrophage (at protein level). Highly expressed in kidney. Also expressed in pancreas, amnion, choriodecidua and placenta. Isoform 2 is expressed at much lower level.

It is found in the cell membrane. It localises to the secreted. Receptor for secretory phospholipase A2 (sPLA2). Acts as a receptor for phospholipase sPLA2-IB/PLA2G1B but not sPLA2-IIA/PLA2G2A. Also able to bind to snake PA2-like toxins. Although its precise function remains unclear, binding of sPLA2 to its receptor participates in both positive and negative regulation of sPLA2 functions as well as clearance of sPLA2. Binding of sPLA2-IB/PLA2G1B induces various effects depending on the cell type, such as activation of the mitogen-activated protein kinase (MAPK) cascade to induce cell proliferation, the production of lipid mediators, selective release of arachidonic acid in bone marrow-derived mast cells. In neutrophils, binding of sPLA2-IB/PLA2G1B can activate p38 MAPK to stimulate elastase release and cell adhesion. May be involved in responses in pro-inflammatory cytokine productions during endotoxic shock. Also has endocytic properties and rapidly internalizes sPLA2 ligands, which is particularly important for the clearance of extracellular sPLA2s to protect their potent enzymatic activities. The soluble secretory phospholipase A2 receptor form is circulating and acts as a negative regulator of sPLA2 functions by blocking the biological functions of sPLA2-IB/PLA2G1B. In podocytes, binding of sPLA2-IB/PLA2G1B can regulate podocyte survival and glomerular homeostasis. The sequence is that of Secretory phospholipase A2 receptor (PLA2R1) from Homo sapiens (Human).